A 107-amino-acid polypeptide reads, in one-letter code: Neuroparsin-A (107 aa).

An N-terminal signal peptide occupies residues 1–22 (MKATAALVAATLLLAVTLFHRA). The propeptide occupies 23–24 (ER).

As to quaternary structure, homodimer; disulfide-linked.

Functionally, neurosparins are multifunctional neurohormones: they inhibit the effects of juvenile hormone, stimulate fluid reabsorption of isolated recta and induces an increase in hemolymph lipid and trehalose levels. This Locusta migratoria (Migratory locust) protein is Neuroparsin-A.